The chain runs to 414 residues: Histidine--tRNA ligase (414 aa).

Belongs to the class-II aminoacyl-tRNA synthetase family. In terms of assembly, homodimer.

It localises to the cytoplasm. It catalyses the reaction tRNA(His) + L-histidine + ATP = L-histidyl-tRNA(His) + AMP + diphosphate + H(+). The sequence is that of Histidine--tRNA ligase from Pelobacter propionicus (strain DSM 2379 / NBRC 103807 / OttBd1).